A 361-amino-acid polypeptide reads, in one-letter code: Fructose-bisphosphate aldolase (361 aa).

Ser-63 is a binding site for D-glyceraldehyde 3-phosphate. Asp-110 (proton donor) is an active-site residue. His-111, Asp-145, Glu-175, and His-227 together coordinate Zn(2+). Position 228 (Gly-228) interacts with dihydroxyacetone phosphate. Position 266 (His-266) interacts with Zn(2+). Dihydroxyacetone phosphate-binding positions include 267 to 269 and 288 to 291; these read GGS and NLDT.

It belongs to the class II fructose-bisphosphate aldolase family. Homodimer. Requires Zn(2+) as cofactor.

The catalysed reaction is beta-D-fructose 1,6-bisphosphate = D-glyceraldehyde 3-phosphate + dihydroxyacetone phosphate. The protein operates within carbohydrate degradation; glycolysis; D-glyceraldehyde 3-phosphate and glycerone phosphate from D-glucose: step 4/4. Catalyzes the aldol condensation of dihydroxyacetone phosphate (DHAP or glycerone-phosphate) with glyceraldehyde 3-phosphate (G3P) to form fructose 1,6-bisphosphate (FBP) in gluconeogenesis and the reverse reaction in glycolysis. The protein is Fructose-bisphosphate aldolase (FBA1) of Kluyveromyces lactis (strain ATCC 8585 / CBS 2359 / DSM 70799 / NBRC 1267 / NRRL Y-1140 / WM37) (Yeast).